Reading from the N-terminus, the 213-residue chain is Thiamine-phosphate synthase (213 aa).

Residues 39–43 (QLREK) and Asn71 each bind 4-amino-2-methyl-5-(diphosphooxymethyl)pyrimidine. Positions 72 and 91 each coordinate Mg(2+). 4-amino-2-methyl-5-(diphosphooxymethyl)pyrimidine is bound at residue Ser110. 2-[(2R,5Z)-2-carboxy-4-methylthiazol-5(2H)-ylidene]ethyl phosphate is bound at residue 136 to 138 (TGT). A 4-amino-2-methyl-5-(diphosphooxymethyl)pyrimidine-binding site is contributed by Lys139. 2-[(2R,5Z)-2-carboxy-4-methylthiazol-5(2H)-ylidene]ethyl phosphate-binding positions include Gly166 and 186-187 (VS).

Belongs to the thiamine-phosphate synthase family. Requires Mg(2+) as cofactor.

It catalyses the reaction 2-[(2R,5Z)-2-carboxy-4-methylthiazol-5(2H)-ylidene]ethyl phosphate + 4-amino-2-methyl-5-(diphosphooxymethyl)pyrimidine + 2 H(+) = thiamine phosphate + CO2 + diphosphate. It carries out the reaction 2-(2-carboxy-4-methylthiazol-5-yl)ethyl phosphate + 4-amino-2-methyl-5-(diphosphooxymethyl)pyrimidine + 2 H(+) = thiamine phosphate + CO2 + diphosphate. The enzyme catalyses 4-methyl-5-(2-phosphooxyethyl)-thiazole + 4-amino-2-methyl-5-(diphosphooxymethyl)pyrimidine + H(+) = thiamine phosphate + diphosphate. The protein operates within cofactor biosynthesis; thiamine diphosphate biosynthesis; thiamine phosphate from 4-amino-2-methyl-5-diphosphomethylpyrimidine and 4-methyl-5-(2-phosphoethyl)-thiazole: step 1/1. Condenses 4-methyl-5-(beta-hydroxyethyl)thiazole monophosphate (THZ-P) and 2-methyl-4-amino-5-hydroxymethyl pyrimidine pyrophosphate (HMP-PP) to form thiamine monophosphate (TMP). This chain is Thiamine-phosphate synthase, found in Clostridium botulinum (strain Eklund 17B / Type B).